Here is a 250-residue protein sequence, read N- to C-terminus: MAVTKLVLVRHGESQWNKENRFTGWYDVDLSEKGVSEAKAAGKLLKEEGFSFDFAYTSVLKRAIHTLWNVLDELDQAWLPVEKSWKLNERHYGALQGLNKAETAEKYGDEQVKQWRRGFAVTPPELTKDDERYPGHDPRYAKLSEKELPLTESLALTIDRVIPYWNDTILPRMKSGERVIIAAHGNSLRALVKYLDNMSEDEILELNIPTGVPLVYEFDENFKPIKHYYLGNADEIAAKAAAVANQGKAK.

Substrate-binding positions include 10-17, 23-24, arginine 62, 89-92, lysine 100, 116-117, and 185-186; these read RHGESQWN, TG, ERHY, RR, and GN. The active-site Tele-phosphohistidine intermediate is the histidine 11. The active-site Proton donor/acceptor is glutamate 89.

This sequence belongs to the phosphoglycerate mutase family. BPG-dependent PGAM subfamily. As to quaternary structure, homodimer.

It carries out the reaction (2R)-2-phosphoglycerate = (2R)-3-phosphoglycerate. It functions in the pathway carbohydrate degradation; glycolysis; pyruvate from D-glyceraldehyde 3-phosphate: step 3/5. In terms of biological role, catalyzes the interconversion of 2-phosphoglycerate and 3-phosphoglycerate. The polypeptide is 2,3-bisphosphoglycerate-dependent phosphoglycerate mutase (Salmonella choleraesuis (strain SC-B67)).